The following is a 341-amino-acid chain: tRNA N6-adenosine threonylcarbamoyltransferase (341 aa).

Positions 111 and 115 each coordinate Fe cation. Substrate is bound by residues 134–138, aspartate 167, glycine 180, and asparagine 274; that span reads LVSGG. Residue aspartate 302 participates in Fe cation binding.

It belongs to the KAE1 / TsaD family. Fe(2+) is required as a cofactor.

The protein resides in the cytoplasm. The enzyme catalyses L-threonylcarbamoyladenylate + adenosine(37) in tRNA = N(6)-L-threonylcarbamoyladenosine(37) in tRNA + AMP + H(+). Required for the formation of a threonylcarbamoyl group on adenosine at position 37 (t(6)A37) in tRNAs that read codons beginning with adenine. Is involved in the transfer of the threonylcarbamoyl moiety of threonylcarbamoyl-AMP (TC-AMP) to the N6 group of A37, together with TsaE and TsaB. TsaD likely plays a direct catalytic role in this reaction. This Paraburkholderia phymatum (strain DSM 17167 / CIP 108236 / LMG 21445 / STM815) (Burkholderia phymatum) protein is tRNA N6-adenosine threonylcarbamoyltransferase.